The following is a 165-amino-acid chain: Neurotrophin-3 (165 aa).

The N-terminal stretch at 1–3 (IQS) is a signal peptide. The propeptide occupies 4–119 (TSMDQGSLSE…VLNQTSRRKR (116 aa)). Residue asparagine 112 is glycosylated (N-linked (GlcNAc...) asparagine).

It belongs to the NGF-beta family.

It is found in the secreted. Its function is as follows. Seems to promote the survival of visceral and proprioceptive sensory neurons. The chain is Neurotrophin-3 (NTF3) from Aspidites melanocephalus (Black-headed python).